Here is a 138-residue protein sequence, read N- to C-terminus: Glutathione S-transferase Mu 5 (138 aa).

A Phosphoserine modification is found at Ser1. The GST N-terminal domain occupies Ser1–Arg71. Residues Tyr6–Trp7, Trp39–Lys43, Asn52–Leu53, and Gln65–Ser66 contribute to the glutathione site. Positions Ile72 to Ile135 constitute a GST C-terminal domain.

The protein belongs to the GST superfamily. Mu family. In terms of assembly, homodimer.

The protein resides in the cytoplasm. It catalyses the reaction RX + glutathione = an S-substituted glutathione + a halide anion + H(+). In terms of biological role, conjugation of reduced glutathione to a wide number of exogenous and endogenous hydrophobic electrophiles. The sequence is that of Glutathione S-transferase Mu 5 from Mesocricetus auratus (Golden hamster).